The following is a 41-amino-acid chain: MNFLMRAIFSLLLLFTLSIPVISDCVAMAIESRFKYMMLLF.

The N-terminal stretch at 1–23 is a signal peptide; sequence MNFLMRAIFSLLLLFTLSIPVIS.

This is an uncharacterized protein from Escherichia coli (strain K12).